The following is a 259-amino-acid chain: Imidazole glycerol phosphate synthase subunit HisF (259 aa).

Catalysis depends on residues Asp11 and Asp130.

Belongs to the HisA/HisF family. Heterodimer of HisH and HisF.

The protein localises to the cytoplasm. It carries out the reaction 5-[(5-phospho-1-deoxy-D-ribulos-1-ylimino)methylamino]-1-(5-phospho-beta-D-ribosyl)imidazole-4-carboxamide + L-glutamine = D-erythro-1-(imidazol-4-yl)glycerol 3-phosphate + 5-amino-1-(5-phospho-beta-D-ribosyl)imidazole-4-carboxamide + L-glutamate + H(+). It functions in the pathway amino-acid biosynthesis; L-histidine biosynthesis; L-histidine from 5-phospho-alpha-D-ribose 1-diphosphate: step 5/9. Its function is as follows. IGPS catalyzes the conversion of PRFAR and glutamine to IGP, AICAR and glutamate. The HisF subunit catalyzes the cyclization activity that produces IGP and AICAR from PRFAR using the ammonia provided by the HisH subunit. This chain is Imidazole glycerol phosphate synthase subunit HisF, found in Polaromonas naphthalenivorans (strain CJ2).